Here is a 403-residue protein sequence, read N- to C-terminus: Argininosuccinate synthase (403 aa).

Residues 12–20 (AYSGGLDTS) and Ala39 each bind ATP. Tyr91 serves as a coordination point for L-citrulline. Gly121 contributes to the ATP binding site. L-aspartate contacts are provided by Thr123, Asn127, and Asp128. Asn127 is an L-citrulline binding site. The L-citrulline site is built by Arg131, Ser180, Ser189, Glu265, and Tyr277.

The protein belongs to the argininosuccinate synthase family. Type 1 subfamily. In terms of assembly, homotetramer.

It is found in the cytoplasm. It carries out the reaction L-citrulline + L-aspartate + ATP = 2-(N(omega)-L-arginino)succinate + AMP + diphosphate + H(+). It participates in amino-acid biosynthesis; L-arginine biosynthesis; L-arginine from L-ornithine and carbamoyl phosphate: step 2/3. The chain is Argininosuccinate synthase from Buchnera aphidicola subsp. Acyrthosiphon pisum (strain 5A).